Here is a 157-residue protein sequence, read N- to C-terminus: MIVLGIDPALGSLGWAVVAKESAKLKYLASGVIKTSSKDEIHHRLSYINSILEKVILEYKPNMAAIEETFVNTNSVTSLKLGYARGAIMSLIGRYDLDMREFKPNTIKKTVTGYGHAEKDQILHMIKLLLPGTAAITNSDEADAVAIAYTCLVTKNY.

Active-site residues include D7, E67, and D140. D7, E67, and D140 together coordinate Mg(2+).

Belongs to the RuvC family. In terms of assembly, homodimer which binds Holliday junction (HJ) DNA. The HJ becomes 2-fold symmetrical on binding to RuvC with unstacked arms; it has a different conformation from HJ DNA in complex with RuvA. In the full resolvosome a probable DNA-RuvA(4)-RuvB(12)-RuvC(2) complex forms which resolves the HJ. It depends on Mg(2+) as a cofactor.

The protein localises to the cytoplasm. The catalysed reaction is Endonucleolytic cleavage at a junction such as a reciprocal single-stranded crossover between two homologous DNA duplexes (Holliday junction).. Its function is as follows. The RuvA-RuvB-RuvC complex processes Holliday junction (HJ) DNA during genetic recombination and DNA repair. Endonuclease that resolves HJ intermediates. Cleaves cruciform DNA by making single-stranded nicks across the HJ at symmetrical positions within the homologous arms, yielding a 5'-phosphate and a 3'-hydroxyl group; requires a central core of homology in the junction. The consensus cleavage sequence is 5'-(A/T)TT(C/G)-3'. Cleavage occurs on the 3'-side of the TT dinucleotide at the point of strand exchange. HJ branch migration catalyzed by RuvA-RuvB allows RuvC to scan DNA until it finds its consensus sequence, where it cleaves and resolves the cruciform DNA. This chain is Crossover junction endodeoxyribonuclease RuvC, found in Rickettsia bellii (strain RML369-C).